Consider the following 252-residue polypeptide: Metalloprotease LoiP (252 aa).

A signal peptide spans 1–18 (MKIRALLVAMSVATVLTG). Residue C19 is the site of N-palmitoyl cysteine attachment. The S-diacylglycerol cysteine moiety is linked to residue C19. A disulfide bond links C53 and C108. H130 contacts Zn(2+). Residue E131 is part of the active site. Zn(2+) contacts are provided by H134 and E189. A disordered region spans residues 224 to 252 (RQSSMFDDHPASAERAQHIRDRMSADGIK).

Belongs to the peptidase M48B family. Interacts with Era and BepA. Zn(2+) is required as a cofactor. The intramolecular disulfide bond improves the stability and the activity of LoiP. It forms even in the absence of the oxido-reductase DsbA.

It is found in the cell outer membrane. Its function is as follows. Metalloprotease that cleaves substrates preferentially between Phe-Phe residues. Plays a role in response to some stress conditions. Seems to regulate the expression of speB. This Escherichia coli (strain K12) protein is Metalloprotease LoiP (loiP).